The primary structure comprises 188 residues: Large ribosomal subunit protein uL22 (188 aa).

The interval 155 to 188 is disordered; the sequence is STPEGAKKGKKKKGTKDAVEKSSKRVKTAATAAH.

It belongs to the universal ribosomal protein uL22 family.

This Agriotes lineatus (Lined click beetle) protein is Large ribosomal subunit protein uL22 (RpL17).